The chain runs to 444 residues: Zinc protease PqqE (444 aa).

A signal peptide spans 1–28 (MKHFSVKRLLGLSSVLLVTLGASMHAQS). Position 78 (His78) interacts with Zn(2+). Residue Glu81 is the Proton acceptor of the active site. Zn(2+) is bound by residues His82 and Glu158.

This sequence belongs to the peptidase M16 family. Zn(2+) serves as cofactor.

The protein localises to the secreted. Its activity is regulated as follows. Can function alone, but full activity requires the presence of the non-peptidase homolog YmxG. Functionally, virulence factor that cleaves the cytoplasmic domain of the human junctional adhesion molecule A (JAM-A), compromising gastric epithelial barrier function and cell-cell adhesion. Cleavage of JAM-A occurs after Ala-285 or, to a lesser extent, before Ala-285. This Helicobacter pylori (strain ATCC 700392 / 26695) (Campylobacter pylori) protein is Zinc protease PqqE.